The following is a 285-amino-acid chain: HTH-type transcriptional regulator MurR (285 aa).

An HTH rpiR-type domain is found at 1-77 (MLYLTKIRNA…MALIGEYSAS (77 aa)). Residues 37–56 (SRKMAKQLGISQSSIVKFAQ) constitute a DNA-binding region (H-T-H motif). Positions 128–268 (IIEVISKAPF…FVGLVQLNDV (141 aa)) constitute an SIS domain.

Homotetramer.

It participates in amino-sugar metabolism; N-acetylmuramate degradation [regulation]. Represses the expression of the murPQ operon involved in the uptake and degradation of N-acetylmuramic acid (MurNAc). Binds to two adjacent inverted repeats within the operator region. MurNAc 6-phosphate, the substrate of MurQ, is the specific inducer that weakens binding of MurR to the operator. In Shigella sonnei (strain Ss046), this protein is HTH-type transcriptional regulator MurR.